The chain runs to 97 residues: Putative regulatory protein Dole_1911 (97 aa).

Belongs to the RemA family.

The protein is Putative regulatory protein Dole_1911 of Desulfosudis oleivorans (strain DSM 6200 / JCM 39069 / Hxd3) (Desulfococcus oleovorans).